Reading from the N-terminus, the 1249-residue chain is Fanconi anemia group J protein (1249 aa).

Positions 11-442 constitute a Helicase ATP-binding domain; it reads GGVKIYFPYK…KDHEPLRAVC (432 aa). Over residues 102–127 the composition is skewed to polar residues; that stretch reads QGTSRHFNYPSTPPSERNGTSSTCQD. The segment at 102-131 is disordered; the sequence is QGTSRHFNYPSTPPSERNGTSSTCQDSPEK. Residues 158 to 175 carry the Nuclear localization signal motif; the sequence is KKRIRPLETTQQIRKRHC. Residue 185-192 coordinates ATP; the sequence is AKVDSGKT. Positions 283, 298, 310, and 350 each coordinate [4Fe-4S] cluster. A DEAH box motif is present at residues 393-396; it reads DEAH. 7 positions are modified to phosphoserine: Ser-505, Ser-927, Ser-930, Ser-956, Ser-990, Ser-1004, and Ser-1032. The interaction with BRCA1 stretch occupies residues 888–1063; it reads HQKVLNVSIK…ESSNLTVNTS (176 aa). 2 disordered regions span residues 1018 to 1042 and 1108 to 1127; these read KATP…EKME and VSEE…EAED. Polar residues predominate over residues 1023–1032; the sequence is LGSSENSASS. Residues 1110–1122 show a composition bias toward basic and acidic residues; that stretch reads EEDKQSTSNRDFE. The residue at position 1237 (Ser-1237) is a Phosphoserine. At Lys-1249 the chain carries N6-acetyllysine.

The protein belongs to the DEAD box helicase family. DEAH subfamily. As to quaternary structure, interacts with the replication protein A complex (RPA) via the RPA1 subunit; following DNA damage they colocalize in foci in the nucleus. Binds directly to the BRCT domains of BRCA1. Interacts with the CIA complex components CIAO1, CIAO2B and MMS19. It depends on [4Fe-4S] cluster as a cofactor. Post-translationally, phosphorylated. Phosphorylation is necessary for interaction with BRCA1, and is cell-cycle regulated. In terms of processing, acetylation at Lys-1249 facilitates DNA end processing required for repair and checkpoint signaling. Ubiquitously expressed, with highest levels in testis.

It is found in the nucleus. The protein localises to the cytoplasm. The catalysed reaction is Couples ATP hydrolysis with the unwinding of duplex DNA at the replication fork by translocating in the 5'-3' direction. This creates two antiparallel DNA single strands (ssDNA). The leading ssDNA polymer is the template for DNA polymerase III holoenzyme which synthesizes a continuous strand.. It catalyses the reaction ATP + H2O = ADP + phosphate + H(+). Helicase activity on forked substrates is stimulated by replication protein A complex heterotrimer (RPA1, RPA2, RPA3). Helicase activity on G-quadruplex DNA is stimulated 3-fold by RPA, and inhibited by MSH2/MSH6. Unwinding of G-quadruplex DNA is inhibited by ATP-gamma-S and telomestatin (TMS); TMA does not inhibit unwinding of forked-duplex DNA. Helicase activity on dsDNA and G-quadruplex DNA is inhibited by porphyrin derivatives meso-tetra (N-methyl-4-pyridyl) porphine tetra tosylate (T4) and N-methyl mesoporphyrin IX (NMM). Functionally, DNA-dependent ATPase and 5'-3' DNA helicase required for the maintenance of chromosomal stability. Acts late in the Fanconi anemia pathway, after FANCD2 ubiquitination. Involved in the repair of DNA double-strand breaks by homologous recombination in a manner that depends on its association with BRCA1. Involved in the repair of abasic sites at replication forks by promoting the degradation of DNA-protein cross-links: acts by catalyzing unfolding of HMCES DNA-protein cross-link via its helicase activity, exposing the underlying DNA and enabling cleavage of the DNA-protein adduct by the SPRTN metalloprotease. Can unwind RNA:DNA substrates. Unwinds G-quadruplex DNA; unwinding requires a 5'-single stranded tail. The sequence is that of Fanconi anemia group J protein from Homo sapiens (Human).